The sequence spans 330 residues: GMP reductase (330 aa).

Residue Cys-180 is the Thioimidate intermediate of the active site. Position 209–232 (209–232 (LIADGGIRHNGDIAKSVRFGASMV)) interacts with NADP(+).

The protein belongs to the IMPDH/GMPR family. GuaC type 2 subfamily.

It catalyses the reaction IMP + NH4(+) + NADP(+) = GMP + NADPH + 2 H(+). Its function is as follows. Catalyzes the irreversible NADPH-dependent deamination of GMP to IMP. It functions in the conversion of nucleobase, nucleoside and nucleotide derivatives of G to A nucleotides, and in maintaining the intracellular balance of A and G nucleotides. The polypeptide is GMP reductase (Lactobacillus acidophilus (strain ATCC 700396 / NCK56 / N2 / NCFM)).